Here is a 630-residue protein sequence, read N- to C-terminus: Ankyrin repeat protein OPG025 (630 aa).

6 ANK repeats span residues 36–69 (DGET…YKNI), 70–100 (NDFD…EINS), 103–134 (NGIN…PTCS), 174–210 (MGKT…EMCH), 338–367 (KHIN…VVVN), and 408–437 (HGRS…DINI).

Belongs to the orthopoxvirus OPG025 family. As to quaternary structure, interacts with components of host SCF complex CUL1 and SKP1 and components of the cullin deneddylation/COP9 signalosome complex subunits COPS7A and COPS7B.

In terms of biological role, plays a role in the inhibition of host immune repsonse by counteracting the action of interferons on early events in the viral replication cycle. In Monkeypox virus, this protein is Ankyrin repeat protein OPG025 (OPG025).